The sequence spans 96 residues: MNIRPLHDRVIVERKEVESKSAGGIVLTGSAAEKSTRGVVLAVGKGRILENGTVLPLDVKVGDTVIFAEGYGTKTEKIDGKEVLVMSENDIMAIVE.

This sequence belongs to the GroES chaperonin family. As to quaternary structure, heptamer of 7 subunits arranged in a ring. Interacts with the chaperonin GroEL.

Its subcellular location is the cytoplasm. Together with the chaperonin GroEL, plays an essential role in assisting protein folding. The GroEL-GroES system forms a nano-cage that allows encapsulation of the non-native substrate proteins and provides a physical environment optimized to promote and accelerate protein folding. GroES binds to the apical surface of the GroEL ring, thereby capping the opening of the GroEL channel. This chain is Co-chaperonin GroES, found in Vibrio campbellii (strain ATCC BAA-1116).